The primary structure comprises 81 residues: Acyl carrier protein (81 aa).

The region spanning 2-80 (ASEQEILSGL…DAVAYISQAQ (79 aa)) is the Carrier domain. At Ser-40 the chain carries O-(pantetheine 4'-phosphoryl)serine.

The protein belongs to the acyl carrier protein (ACP) family. 4'-phosphopantetheine is transferred from CoA to a specific serine of apo-ACP by AcpS. This modification is essential for activity because fatty acids are bound in thioester linkage to the sulfhydryl of the prosthetic group.

The protein resides in the cytoplasm. It functions in the pathway lipid metabolism; fatty acid biosynthesis. Its function is as follows. Carrier of the growing fatty acid chain in fatty acid biosynthesis. This Kineococcus radiotolerans (strain ATCC BAA-149 / DSM 14245 / SRS30216) protein is Acyl carrier protein.